A 432-amino-acid polypeptide reads, in one-letter code: 3-phosphoshikimate 1-carboxyvinyltransferase (432 aa).

3-phosphoshikimate contacts are provided by K23, S24, and R28. Position 23 (K23) interacts with phosphoenolpyruvate. Positions 95 and 123 each coordinate phosphoenolpyruvate. Residues S167, Q169, D317, and K344 each contribute to the 3-phosphoshikimate site. Q169 is a phosphoenolpyruvate binding site. Residue D317 is the Proton acceptor of the active site. Phosphoenolpyruvate is bound by residues R348 and R390.

Belongs to the EPSP synthase family. As to quaternary structure, monomer.

It localises to the cytoplasm. The enzyme catalyses 3-phosphoshikimate + phosphoenolpyruvate = 5-O-(1-carboxyvinyl)-3-phosphoshikimate + phosphate. Its pathway is metabolic intermediate biosynthesis; chorismate biosynthesis; chorismate from D-erythrose 4-phosphate and phosphoenolpyruvate: step 6/7. Its function is as follows. Catalyzes the transfer of the enolpyruvyl moiety of phosphoenolpyruvate (PEP) to the 5-hydroxyl of shikimate-3-phosphate (S3P) to produce enolpyruvyl shikimate-3-phosphate and inorganic phosphate. This is 3-phosphoshikimate 1-carboxyvinyltransferase from Staphylococcus carnosus (strain TM300).